The chain runs to 102 residues: NADH-quinone oxidoreductase subunit K 2 (102 aa).

The next 3 membrane-spanning stretches (helical) occupy residues 1–21, 30–50, and 65–85; these read MIVP…LGLV, IIMM…AFVG, and LMIM…VVYL.

It belongs to the complex I subunit 4L family. NDH-1 is composed of 14 different subunits. Subunits NuoA, H, J, K, L, M, N constitute the membrane sector of the complex.

It localises to the cell inner membrane. The enzyme catalyses a quinone + NADH + 5 H(+)(in) = a quinol + NAD(+) + 4 H(+)(out). In terms of biological role, NDH-1 shuttles electrons from NADH, via FMN and iron-sulfur (Fe-S) centers, to quinones in the respiratory chain. The immediate electron acceptor for the enzyme in this species is believed to be ubiquinone. Couples the redox reaction to proton translocation (for every two electrons transferred, four hydrogen ions are translocated across the cytoplasmic membrane), and thus conserves the redox energy in a proton gradient. In Geotalea daltonii (strain DSM 22248 / JCM 15807 / FRC-32) (Geobacter daltonii), this protein is NADH-quinone oxidoreductase subunit K 2.